The chain runs to 569 residues: MEQTWDSYISSLNQNSLPRQVEVTQGRYSGSLENLSFSKGDIITVVDLEPVFVRAELKDGDQVLDVVTIPLRYEGNFQLMADPVSFETVADLTRSVRLPQSPVAPRSPPRFQNSIPISADNLPMKLRKGETLSLIGFQESRGRRLLQCKVLRKKPPLTVLLPMDCRGHFLECQDDRFYSIDTIVRWKMLAGRKRTVRVQARHHPKLLGPLVPEHFRGHLVLYPCFSVTANLLGETRVSIPSDLDISVTEIARLDRKPRTTMRQIYSMEESKFPVRVKIMNVVQSESKEYPKPLKRGQLLTILKTEEVKKFVASEISQGKKGKCFLVPYTYQGLVLRRGRYFYAVSDVAAAMKHGELCFQASQDYTSYLGSFASFRANECFLALKKSVVSAEIHGELHRVEVLKCLNIATKAHVKLPLFAVGKFLELFDGARPGTLQELCQVTRLPCHVRVTSPDPSMTVDPLYGTKELRIENVIIEQCLIAKDEPTLEDIISSADMYREWPETTFEIPIEKISCEVLVVEERSWIADVRKERCRPLQSIQEVTKESLAFSNCLVIRRPPPPVPKPRSLF.

CABIT regions lie at residues 1-254 and 255-523; these read MEQT…ARLD and RKPR…EERS.

This sequence belongs to the themis family. As to expression, specifically expressed in the intestine.

This chain is Protein THEMIS3 (Themis3), found in Mus musculus (Mouse).